The chain runs to 513 residues: EGF-like domain-containing protein 1 (513 aa).

The first 21 residues, methionine 1 to alanine 21, serve as a signal peptide directing secretion. The 37-residue stretch at proline 72–glutamate 108 folds into the EGF-like domain. 3 disulfide bridges follow: cysteine 76–cysteine 86, cysteine 80–cysteine 96, and cysteine 98–cysteine 107. Residues glutamate 115–serine 364 form the ZP domain. Residues serine 356 to alanine 411 are disordered. Over residues asparagine 375–asparagine 396 the composition is skewed to pro residues. 2 N-linked (GlcNAc...) asparagine glycosylation sites follow: asparagine 438 and asparagine 503.

Component of the acid-insoluble organic matrix of calcified layers of the shell (at protein level).

The protein localises to the secreted. In Lottia gigantea (Giant owl limpet), this protein is EGF-like domain-containing protein 1.